The chain runs to 100 residues: Urease subunit gamma (100 aa).

It belongs to the urease gamma subunit family. In terms of assembly, heterotrimer of UreA (gamma), UreB (beta) and UreC (alpha) subunits. Three heterotrimers associate to form the active enzyme.

The protein resides in the cytoplasm. It carries out the reaction urea + 2 H2O + H(+) = hydrogencarbonate + 2 NH4(+). Its pathway is nitrogen metabolism; urea degradation; CO(2) and NH(3) from urea (urease route): step 1/1. The chain is Urease subunit gamma from Rhodopseudomonas palustris (strain BisB18).